The chain runs to 320 residues: ATP-dependent 6-phosphofructokinase (320 aa).

Residue Gly-11 coordinates ATP. 21–25 (RAIAR) serves as a coordination point for ADP. ATP is bound by residues 72-73 (RF) and 102-105 (GDGS). A Mg(2+)-binding site is contributed by Asp-103. Substrate contacts are provided by residues 125 to 127 (TID), Arg-162, and 169 to 171 (MGR). Asp-127 serves as the catalytic Proton acceptor. ADP is bound by residues 185 to 187 (GAD) and 213 to 215 (KDH). Residues Glu-222, Arg-243, and 249-252 (HIQR) contribute to the substrate site.

It belongs to the phosphofructokinase type A (PFKA) family. ATP-dependent PFK group I subfamily. Prokaryotic clade 'B1' sub-subfamily. In terms of assembly, homotetramer. Requires Mg(2+) as cofactor.

The protein resides in the cytoplasm. It catalyses the reaction beta-D-fructose 6-phosphate + ATP = beta-D-fructose 1,6-bisphosphate + ADP + H(+). It functions in the pathway carbohydrate degradation; glycolysis; D-glyceraldehyde 3-phosphate and glycerone phosphate from D-glucose: step 3/4. With respect to regulation, allosterically activated by ADP and other diphosphonucleosides, and allosterically inhibited by phosphoenolpyruvate. Catalyzes the phosphorylation of D-fructose 6-phosphate to fructose 1,6-bisphosphate by ATP, the first committing step of glycolysis. This chain is ATP-dependent 6-phosphofructokinase, found in Ligilactobacillus salivarius (strain UCC118) (Lactobacillus salivarius).